We begin with the raw amino-acid sequence, 222 residues long: Triosephosphate isomerase (222 aa).

Substrate is bound at residue 9–11 (NYK). The active-site Electrophile is histidine 93. The active-site Proton acceptor is the glutamate 141. Residues isoleucine 146, glycine 181, and 202 to 203 (AS) each bind substrate.

Belongs to the triosephosphate isomerase family. In terms of assembly, homotetramer; dimer of dimers.

It localises to the cytoplasm. It carries out the reaction D-glyceraldehyde 3-phosphate = dihydroxyacetone phosphate. Its pathway is carbohydrate biosynthesis; gluconeogenesis. The protein operates within carbohydrate degradation; glycolysis; D-glyceraldehyde 3-phosphate from glycerone phosphate: step 1/1. In terms of biological role, involved in the gluconeogenesis. Catalyzes stereospecifically the conversion of dihydroxyacetone phosphate (DHAP) to D-glyceraldehyde-3-phosphate (G3P). This chain is Triosephosphate isomerase, found in Methanosarcina mazei (strain ATCC BAA-159 / DSM 3647 / Goe1 / Go1 / JCM 11833 / OCM 88) (Methanosarcina frisia).